A 536-amino-acid polypeptide reads, in one-letter code: 3',5'-cyclic-AMP phosphodiesterase 4C (536 aa).

The tract at residues 49–69 (QALLGTPPQSSQQAAPAEESG) is disordered. A PDEase domain is found at 178–507 (VQTDQEEQLA…EWYQSRVPCS (330 aa)). Histidine 254 acts as the Proton donor in catalysis. Histidine 254 contacts 3',5'-cyclic AMP. Positions 254 and 258 each coordinate AMP. 4 residues coordinate Zn(2+): histidine 258, histidine 294, aspartate 295, and aspartate 412. 4 residues coordinate AMP: aspartate 295, aspartate 412, glutamine 463, and phenylalanine 466. Aspartate 295 provides a ligand contact to Mg(2+). Residue aspartate 295 coordinates Mn(2+). Glutamine 463 and phenylalanine 466 together coordinate 3',5'-cyclic AMP. Serine 507 bears the Phosphoserine mark.

The protein belongs to the cyclic nucleotide phosphodiesterase family. PDE4 subfamily. As to quaternary structure, part of a complex containing AKAP5, ADCY5, ADCY6 and PKD2. The cofactor is Zn(2+). Requires Mg(2+) as cofactor. Mn(2+) serves as cofactor.

It is found in the cell projection. The protein localises to the cilium. It catalyses the reaction 3',5'-cyclic AMP + H2O = AMP + H(+). Its pathway is purine metabolism; 3',5'-cyclic AMP degradation; AMP from 3',5'-cyclic AMP: step 1/1. In terms of biological role, hydrolyzes the second messenger cAMP, which is a key regulator of many important physiological processes. The chain is 3',5'-cyclic-AMP phosphodiesterase 4C from Rattus norvegicus (Rat).